Reading from the N-terminus, the 1057-residue chain is Histone deacetylase complex subunit SAP130 (1057 aa).

The disordered stretch occupies residues 1 to 69 (MSSQQFPRLG…LPPREEKQEP (69 aa)). Over residues 14–28 (PGLSQPPSQIASSGS) the composition is skewed to polar residues. Basic and acidic residues predominate over residues 41 to 54 (EAGRDADVGTREHV). Arg206 is modified (omega-N-methylarginine). The residue at position 329 (Thr329) is a Phosphothreonine. Residues Ser416 and Ser439 each carry the phosphoserine modification. Disordered stretches follow at residues 619–695 (TTVV…KSEV) and 718–740 (PTVA…IAAA). A compositionally biased stretch (polar residues) spans 620 to 641 (TVVQTHSQSASTNTPAQGSSPR). Residue Lys794 forms a Glycyl lysine isopeptide (Lys-Gly) (interchain with G-Cter in SUMO2) linkage. Residues 827 to 873 (NLSMPPSDLPPGASPRKKPRKQQHVISTEEGDMMETNSTDDEKSAAK) form a disordered region. Positions 845–1057 (PRKQQHVIST…VSKLKRKEKV (213 aa)) are interactions with SIN3A and HDAC1. Ser864 bears the Phosphoserine mark. Thr865 is modified (phosphothreonine). Residues Lys873 and Lys878 each participate in a glycyl lysine isopeptide (Lys-Gly) (interchain with G-Cter in SUMO2) cross-link. Phosphoserine is present on Ser884.

The protein belongs to the SAP130 family. In terms of assembly, component of a mSin3A corepressor complex that contains SIN3A, SAP130, SUDS3/SAP45, ARID4B/SAP180, HDAC1 and HDAC2. Interacts (released by dead or dying cells) with CLEC4E. In terms of processing, acetylated. Post-translationally, sumoylated with SUMO1.

The protein resides in the nucleus. In terms of biological role, acts as a transcriptional repressor. May function in the assembly and/or enzymatic activity of the mSin3A corepressor complex or in mediating interactions between the complex and other regulatory complexes. This is Histone deacetylase complex subunit SAP130 (Sap130) from Mus musculus (Mouse).